Reading from the N-terminus, the 65-residue chain is Potassium channel toxin alpha-KTx 12.6 (65 aa).

The first 22 residues, 1-22 (MKMKIFIITIVIALFITSIVEA), serve as a signal peptide directing secretion. 3 disulfides stabilise this stretch: Cys-30–Cys-51, Cys-36–Cys-56, and Cys-40–Cys-58.

Belongs to the short scorpion toxin superfamily. Potassium channel inhibitor family. Alpha-KTx 12 subfamily. As to expression, expressed by the venom gland.

The protein resides in the secreted. In terms of biological role, inhibits voltage-gated potassium channels. The sequence is that of Potassium channel toxin alpha-KTx 12.6 from Lychas mucronatus (Chinese swimming scorpion).